Reading from the N-terminus, the 1153-residue chain is Nitric oxide synthase, inducible (1153 aa).

The DINNN-motif; mediates interaction with SPSB1, SPSB2 and SPSB4 motif lies at Asp23–Asn27. 2 residues coordinate Zn(2+): Cys110 and Cys115. Ser118 contacts (6R)-L-erythro-5,6,7,8-tetrahydrobiopterin. Cys200 is a heme b binding site. Residue Ser234 is modified to Phosphoserine; by PKA. Residues Gln263, Trp372, Tyr373, and Glu377 each coordinate L-arginine. 4 residues coordinate (6R)-L-erythro-5,6,7,8-tetrahydrobiopterin: Arg381, Ile462, Trp463, and Phe476. Tyr491 contributes to the heme b binding site. Residues Leu515–Ser535 form a calmodulin-binding region. The region spanning Val539–Phe677 is the Flavodoxin-like domain. The FMN site is built by Thr545, Glu546, Thr547, Lys549, and Ser550. The residue at position 575 (Tyr575) is a Phosphotyrosine. Ser578 carries the phosphoserine; by PKA modification. The FMN site is built by Ser591, Thr592, Ser628, Arg633, Cys635, Glu661, and Gln665. An FAD-binding FR-type domain is found at Lys730–Pro970. Residue Arg750 participates in NADP(+) binding. Residue His772 coordinates FAD. Ser892 bears the Phosphoserine; by PKA mark. Positions 906, 908, 909, 924, and 926 each coordinate FAD. Thr929 is a binding site for NADP(+). FAD contacts are provided by Tyr930, Val943, Cys944, and Ser945. Residues Thr984, Arg1017, Ser1046, Arg1047, Lys1053, Tyr1055, Gln1057, and Asp1090 each coordinate NADP(+).

This sequence belongs to the NOS family. Homodimer. Interacts with NHERF1. Interacts with GAPDH; induced by oxidatively-modified low-densitity lipoprotein (LDL(ox)). Interacts with S100A8 and S100A9 to form the iNOS-S100A8/9 transnitrosylase complex. Interacts with SPSB1, SPSB2 and SPSB4. Interacts with ELOC and CUL5 in the presence of SPSB1 or SPSB2 or SPSB4. Forms a complex with ASL, ASS1 and HSP90AA1; the complex regulates cell-autonomous L-arginine synthesis and citrulline recycling while channeling extracellular L-arginine to nitric oxide synthesis pathway. Heme b is required as a cofactor. FAD serves as cofactor. It depends on FMN as a cofactor. The cofactor is (6R)-L-erythro-5,6,7,8-tetrahydrobiopterin. In terms of processing, polyubiquitinated; mediated by SPSB1, SPSB2 and SPSB4, leading to proteasomal degradation. Expressed in the liver, retina, bone cells and airway epithelial cells of the lung. Not expressed in the platelets. Expressed in chondrocytes.

It localises to the cytoplasm. The protein resides in the cytosol. The enzyme catalyses 2 L-arginine + 3 NADPH + 4 O2 + H(+) = 2 L-citrulline + 2 nitric oxide + 3 NADP(+) + 4 H2O. Its activity is regulated as follows. Regulated by calcium/calmodulin. Aspirin inhibits expression and function of this enzyme and effects may be exerted at the level of translational/post-translational modification and directly on the catalytic activity. Functionally, produces nitric oxide (NO) which is a messenger molecule with diverse functions throughout the body. In macrophages, NO mediates tumoricidal and bactericidal actions. Also has nitrosylase activity and mediates cysteine S-nitrosylation of cytoplasmic target proteins such PTGS2/COX2. As component of the iNOS-S100A8/9 transnitrosylase complex involved in the selective inflammatory stimulus-dependent S-nitrosylation of GAPDH on 'Cys-247' implicated in regulation of the GAIT complex activity and probably multiple targets including ANXA5, EZR, MSN and VIM. Involved in inflammation, enhances the synthesis of pro-inflammatory mediators such as IL6 and IL8. The chain is Nitric oxide synthase, inducible from Homo sapiens (Human).